Consider the following 382-residue polypeptide: Mannitol-1-phosphate 5-dehydrogenase (382 aa).

3–14 (ALHFGAGNIGRG) contributes to the NAD(+) binding site.

It belongs to the mannitol dehydrogenase family.

It catalyses the reaction D-mannitol 1-phosphate + NAD(+) = beta-D-fructose 6-phosphate + NADH + H(+). This Salmonella schwarzengrund (strain CVM19633) protein is Mannitol-1-phosphate 5-dehydrogenase.